Reading from the N-terminus, the 249-residue chain is Probable transcriptional regulatory protein AB57_1731 (249 aa).

It belongs to the TACO1 family.

The protein localises to the cytoplasm. This chain is Probable transcriptional regulatory protein AB57_1731, found in Acinetobacter baumannii (strain AB0057).